The sequence spans 222 residues: MRRPGAAALAAAALALAGCAQIPREPITQQPMSAMPPMPPAMQAPGSIYNPGYAGRPLFEDQRPRNVGDILTIVIAENINATKSSGANTNRQGNTSFDVPTAGFLGGLFNKANLSAQGANKFAATGGASAANTFNGTITVTVTNVLPNGNLVVSGEKQMLINQGNEFVRFSGIVNPNTISGQNSVYSTQVADARIEYSAKGYINEAETMGWLQRFFLNIAPW.

The N-terminal stretch at 1–18 (MRRPGAAALAAAALALAG) is a signal peptide. Cys19 is lipidated: N-palmitoyl cysteine. The S-diacylglycerol cysteine moiety is linked to residue Cys19.

The protein belongs to the FlgH family. The basal body constitutes a major portion of the flagellar organelle and consists of four rings (L,P,S, and M) mounted on a central rod.

It is found in the cell outer membrane. The protein resides in the bacterial flagellum basal body. Its function is as follows. Assembles around the rod to form the L-ring and probably protects the motor/basal body from shearing forces during rotation. The sequence is that of Flagellar L-ring protein from Burkholderia mallei (strain ATCC 23344).